The primary structure comprises 462 residues: ATP synthase subunit beta (462 aa).

Residue 151 to 158 (GGAGVGKT) participates in ATP binding.

It belongs to the ATPase alpha/beta chains family. As to quaternary structure, F-type ATPases have 2 components, CF(1) - the catalytic core - and CF(0) - the membrane proton channel. CF(1) has five subunits: alpha(3), beta(3), gamma(1), delta(1), epsilon(1). CF(0) has four main subunits: a(1), b(1), b'(1) and c(9-12).

The protein resides in the cell inner membrane. The enzyme catalyses ATP + H2O + 4 H(+)(in) = ADP + phosphate + 5 H(+)(out). Functionally, produces ATP from ADP in the presence of a proton gradient across the membrane. The catalytic sites are hosted primarily by the beta subunits. The chain is ATP synthase subunit beta from Chlorobium limicola (strain DSM 245 / NBRC 103803 / 6330).